A 59-amino-acid chain; its full sequence is MAVQQNKKSPSKRGMHRSHDFLTNPALAVEPTTGEAHLRHHISPNGFYRGRKVVKAKGE.

The interval Met1–Leu22 is disordered.

It belongs to the bacterial ribosomal protein bL32 family.

The chain is Large ribosomal subunit protein bL32 from Thiobacillus denitrificans (strain ATCC 25259 / T1).